The following is a 538-amino-acid chain: Sterol esterase 2 (538 aa).

The Cytoplasmic portion of the chain corresponds to 1 to 11; that stretch reads MVNKVVDEVQR. Residues 12-32 form a helical; Signal-anchor for type II membrane protein membrane-spanning segment; that stretch reads LVSAIILTSFMTGLFILSLWK. At 33–538 the chain is on the lumenal side; the sequence is NYVTVHFQHK…IENLRFPNAR (506 aa). The tract at residues 42–87 is disordered; that stretch reads KNDPRDTRSSRTKIQPNDKKKKRPARHSRPLSISSTTPLDLQRDQE. Residues 60-70 are compositionally biased toward basic residues; the sequence is KKKKRPARHSR. Phosphoserine occurs at positions 73 and 107. S287 (nucleophile) is an active-site residue. Active-site charge relay system residues include D480 and H511.

It belongs to the AB hydrolase superfamily. Not glycosylated.

Its subcellular location is the cell membrane. The enzyme catalyses a sterol ester + H2O = a sterol + a fatty acid + H(+). Its function is as follows. Mediates the hydrolysis of steryl esters. Required for mobilization of steryl ester, thereby playing a central role in lipid metabolism. The sequence is that of Sterol esterase 2 (YEH2) from Saccharomyces cerevisiae (strain ATCC 204508 / S288c) (Baker's yeast).